The following is an 81-amino-acid chain: MKKGIHPEFDLVVFEDMAGNQFLTRSTKIPKETTTFEGKEYPVIKVAVSSKSHPFYTGEQRFVDTAGRVDKFNKKFNLGKK.

The protein belongs to the bacterial ribosomal protein bL31 family. Type A subfamily. In terms of assembly, part of the 50S ribosomal subunit.

Binds the 23S rRNA. This is Large ribosomal subunit protein bL31 (rpmE) from Fusobacterium nucleatum subsp. nucleatum (strain ATCC 25586 / DSM 15643 / BCRC 10681 / CIP 101130 / JCM 8532 / KCTC 2640 / LMG 13131 / VPI 4355).